The primary structure comprises 182 residues: WUSCHEL-related homeobox 5 (182 aa).

The tract at residues 1–24 (MSFSVKGRSLRGNNNGGTGTKCGR) is disordered. A DNA-binding region (homeobox; WUS-type) is located at residues 20–84 (TKCGRWNPTV…NHKARERQKR (65 aa)).

Belongs to the WUS homeobox family. In terms of tissue distribution, specifically expressed in the central cells of a quiescent center (QC) of the root.

Its subcellular location is the nucleus. In terms of biological role, transcription factor, which may be involved in the specification and maintenance of the stem cells (QC cells) in the root apical meristem (RAM). This is WUSCHEL-related homeobox 5 (WOX5) from Arabidopsis thaliana (Mouse-ear cress).